The primary structure comprises 206 residues: MDLVIKTLDGHEAGKLKVSESIFDLVPREDILQRVVRWQLARRQQGTHQSQGRSDVSRTGAKMFKQKGTGRARHSSARAPQFRGGGKAHGPVFRSHAHDLPKKIRALGLRLALSAKLKAKDLIVVDELAVKDAKTKKLVSHFSKLGFNNALLIGGQEIDINFFRAASNIPNIDVLPIQGINVYDILRRSKLVLSKAAVEALEERFR.

Polar residues predominate over residues 42–54 (RRQQGTHQSQGRS). Positions 42-94 (RRQQGTHQSQGRSDVSRTGAKMFKQKGTGRARHSSARAPQFRGGGKAHGPVFR) are disordered. Positions 64–76 (FKQKGTGRARHSS) are enriched in basic residues.

It belongs to the universal ribosomal protein uL4 family. In terms of assembly, part of the 50S ribosomal subunit.

Its function is as follows. One of the primary rRNA binding proteins, this protein initially binds near the 5'-end of the 23S rRNA. It is important during the early stages of 50S assembly. It makes multiple contacts with different domains of the 23S rRNA in the assembled 50S subunit and ribosome. Functionally, forms part of the polypeptide exit tunnel. In Bartonella tribocorum (strain CIP 105476 / IBS 506), this protein is Large ribosomal subunit protein uL4.